A 536-amino-acid polypeptide reads, in one-letter code: ATPase expression protein 3 (536 aa).

PPR repeat units follow at residues 212–246 (TTTM…KKTP) and 386–421 (TTGS…GVTP).

Its subcellular location is the mitochondrion inner membrane. Functionally, required for respiration. The chain is ATPase expression protein 3 (AEP3) from Eremothecium gossypii (strain ATCC 10895 / CBS 109.51 / FGSC 9923 / NRRL Y-1056) (Yeast).